A 231-amino-acid polypeptide reads, in one-letter code: 7-cyano-7-deazaguanine synthase (231 aa).

8-18 (FSGGQDSTTCL) contacts ATP. Cysteine 188, cysteine 197, cysteine 200, and cysteine 203 together coordinate Zn(2+).

It belongs to the QueC family. Zn(2+) serves as cofactor.

The catalysed reaction is 7-carboxy-7-deazaguanine + NH4(+) + ATP = 7-cyano-7-deazaguanine + ADP + phosphate + H2O + H(+). It participates in purine metabolism; 7-cyano-7-deazaguanine biosynthesis. Its function is as follows. Catalyzes the ATP-dependent conversion of 7-carboxy-7-deazaguanine (CDG) to 7-cyano-7-deazaguanine (preQ(0)). This is 7-cyano-7-deazaguanine synthase from Escherichia coli (strain SMS-3-5 / SECEC).